The following is a 565-amino-acid chain: Ubiquitin carboxyl-terminal hydrolase 39 (565 aa).

2 stretches are compositionally biased toward basic and acidic residues: residues 1-21 (MSGRSKRESRGSTRGKRESES) and 28-39 (VKRERDREREPE). Disordered stretches follow at residues 1–61 (MSGR…SARE) and 75–95 (EREVDEDSEPEREVRAKNGRV). The residue at position 46 (Ser-46) is a Phosphoserine. Lys-51 is covalently cross-linked (Glycyl lysine isopeptide (Lys-Gly) (interchain with G-Cter in SUMO2)). Ser-82 carries the post-translational modification Phosphoserine. Residues 85 to 95 (EREVRAKNGRV) are compositionally biased toward basic and acidic residues. Residues 103 to 200 (RHCPYLDTIN…YVLKPTFTKQ (98 aa)) form a UBP-type; degenerate zinc finger. Residues Cys-136, Cys-139, His-155, and His-161 each contribute to the Zn(2+) site. One can recognise a USP domain in the interval 225–555 (VGLNNIKAND…EAYIQIWKRR (331 aa)).

It belongs to the peptidase C19 family. As to quaternary structure, the U4/U6-U5 tri-snRNP complex is a building block of the precatalytic spliceosome (spliceosome B complex). Component of the U4/U6-U5 tri-snRNP complex composed of the U4, U6 and U5 snRNAs and at least PRPF3, PRPF4, PRPF6, PRPF8, PRPF31, SNRNP200, TXNL4A, SNRNP40, SNRPB, SNRPD1, SNRPD2, SNRPD3, SNRPE, SNRPF, SNRPG, DDX23, CD2BP2, PPIH, SNU13, EFTUD2, SART1 and USP39, plus LSM2, LSM3, LSM4, LSM5, LSM6, LSM7 and LSM8.

Its subcellular location is the nucleus. The catalysed reaction is Thiol-dependent hydrolysis of ester, thioester, amide, peptide and isopeptide bonds formed by the C-terminal Gly of ubiquitin (a 76-residue protein attached to proteins as an intracellular targeting signal).. Functionally, deubiquitinating enzyme that plays a role in many cellular processes including cellular antiviral response, epithelial morphogenesis, DNA repair or B-cell development. Plays a role in pre-mRNA splicing as a component of the U4/U6-U5 tri-snRNP, one of the building blocks of the precatalytic spliceosome. Specifically regulates immunoglobulin gene rearrangement in a spliceosome-dependent manner, which involves modulating chromatin interactions at the Igh locus and therefore plays an essential role in B-cell development. Regulates AURKB mRNA levels, and thereby plays a role in cytokinesis and in the spindle checkpoint. Regulates apoptosis and G2/M cell cycle checkpoint in response to DNA damage by deubiquitinating and stabilizing CHK2. Also plays an important role in DNA repair by controlling the recruitment of XRCC4/LIG4 to DNA double-strand breaks for non-homologous end-joining repair. Participates in antiviral activity by affecting the type I IFN signaling by stabilizing STAT1 and decreasing its 'Lys-6'-linked ubiquitination. Contributes to non-canonical Wnt signaling during epidermal differentiation. Acts as a negative regulator NF-kappa-B activation through deubiquitination of 'Lys-48'-linked ubiquitination of NFKBIA. The protein is Ubiquitin carboxyl-terminal hydrolase 39 of Homo sapiens (Human).